Here is a 254-residue protein sequence, read N- to C-terminus: Isoprenyl transferase (254 aa).

The active site involves D34. A Mg(2+)-binding site is contributed by D34. Residues 35–38 (GNGR), W39, R47, H51, and 79–81 (STE) each bind substrate. N82 acts as the Proton acceptor in catalysis. Substrate-binding positions include W83, R85, R202, and 208 to 210 (RIS). E221 serves as a coordination point for Mg(2+).

It belongs to the UPP synthase family. Homodimer. Mg(2+) is required as a cofactor.

Functionally, catalyzes the condensation of isopentenyl diphosphate (IPP) with allylic pyrophosphates generating different type of terpenoids. The sequence is that of Isoprenyl transferase from Staphylococcus saprophyticus subsp. saprophyticus (strain ATCC 15305 / DSM 20229 / NCIMB 8711 / NCTC 7292 / S-41).